We begin with the raw amino-acid sequence, 108 residues long: Small ribosomal subunit protein uS17 (108 aa).

The protein belongs to the universal ribosomal protein uS17 family. In terms of assembly, part of the 30S ribosomal subunit.

One of the primary rRNA binding proteins, it binds specifically to the 5'-end of 16S ribosomal RNA. The sequence is that of Small ribosomal subunit protein uS17 from Methanocorpusculum labreanum (strain ATCC 43576 / DSM 4855 / Z).